Reading from the N-terminus, the 215-residue chain is Probable peptidyl-prolyl cis-trans isomerase (215 aa).

Positions 38–197 constitute a PPIase cyclophilin-type domain; the sequence is DGIYAVMETN…RRGAAAKRFV (160 aa).

It belongs to the cyclophilin-type PPIase family.

The catalysed reaction is [protein]-peptidylproline (omega=180) = [protein]-peptidylproline (omega=0). In terms of biological role, PPIases accelerate the folding of proteins. It catalyzes the cis-trans isomerization of proline imidic peptide bonds in oligopeptides. The chain is Probable peptidyl-prolyl cis-trans isomerase (ppiB) from Treponema pallidum (strain Nichols).